Consider the following 352-residue polypeptide: Protein-glutamate methylesterase/protein-glutamine glutaminase (352 aa).

One can recognise a Response regulatory domain in the interval 5–122 (RAIVIDDSAF…SLDIRNVEDE (118 aa)). Aspartate 56 carries the 4-aspartylphosphate modification. In terms of domain architecture, CheB-type methylesterase spans 163 to 352 (RSIVSIGTST…IPSLIVKQLT (190 aa)). Residues serine 171, histidine 198, and aspartate 294 contribute to the active site.

The protein belongs to the CheB family. In terms of processing, phosphorylated by CheA. Phosphorylation of the N-terminal regulatory domain activates the methylesterase activity.

Its subcellular location is the cytoplasm. The catalysed reaction is [protein]-L-glutamate 5-O-methyl ester + H2O = L-glutamyl-[protein] + methanol + H(+). It catalyses the reaction L-glutaminyl-[protein] + H2O = L-glutamyl-[protein] + NH4(+). Functionally, involved in chemotaxis. Part of a chemotaxis signal transduction system that modulates chemotaxis in response to various stimuli. Catalyzes the demethylation of specific methylglutamate residues introduced into the chemoreceptors (methyl-accepting chemotaxis proteins or MCP) by CheR. Also mediates the irreversible deamidation of specific glutamine residues to glutamic acid. In Oceanobacillus iheyensis (strain DSM 14371 / CIP 107618 / JCM 11309 / KCTC 3954 / HTE831), this protein is Protein-glutamate methylesterase/protein-glutamine glutaminase.